Here is a 201-residue protein sequence, read N- to C-terminus: MARDYDHLFKLLIIGDSGVGKSSLLLRFADNTFSGSYITTIGVDFKIRTVEINGEKVKLQIWDTAGQERFRTITSTYYRGTHGVIVVYDVTSAESFVNVKRWLHEINQNCDDVCRILVGNKNDDPERKVVETEDAYKFAGQMGIQLFETSAKENVNVEEMFNCITELVLRAKKDNLAKQQQQQQNDVVKLTKNSKRKKRCC.

The GTP site is built by Gly-18, Val-19, Gly-20, Lys-21, Ser-22, Ser-23, Ser-34, Gly-35, Tyr-37, Thr-39, and Thr-40. A Mg(2+)-binding site is contributed by Ser-22. The Switch 1 signature appears at 30 to 42 (DNTFSGSYITTIG). Residues Thr-40 and Asp-63 each contribute to the Mg(2+) site. The Switch 2 motif lies at 64–80 (TAGQERFRTITSTYYRG). A GTP-binding site is contributed by Gly-66. Phosphothreonine; by LRRK2 is present on Thr-72. Ser-75 bears the O-(2-cholinephosphoryl)serine mark. Residue Tyr-77 is modified to O-AMP-tyrosine. Residues Asn-120, Lys-121, Asp-123, Ala-151, and Lys-152 each coordinate GTP. 2 S-geranylgeranyl cysteine lipidation sites follow: Cys-200 and Cys-201.

The protein belongs to the small GTPase superfamily. Rab family. Interacts with DENND1A and DENND1B; in a nucleotide-dependent manner. Interacts with DENND1C; weak interaction which is nucleotide-independent. Interacts (GTP-bound form) with ACAP2, RUSC2, OCRL MICAL1 and MICALL1; the interaction is direct and probably recruits these effectors to membranes. Interacts with EHD1; the interaction is indirect through MICALL1 and probably recruits EHD1 to membranes. Interacts with GDI1, GDI2, CHM and CHML; phosphorylation at Thr-72 by LRRK2 disrupts these interactions. Requires Mg(2+) as cofactor. Post-translationally, phosphorylation at Thr-72 by LRRK2 prevents the association of regulatory proteins including CHM, CHML and GDP dissociation inhibitors GDI1 and GDI2. In terms of processing, AMPylation at Tyr-77 by L.pneumophila DrrA occurs in the switch 2 region and leads to moderate inactivation of the GTPase activity. It appears to prolong the lifetime of the GTP state of RAB1B by restricting access of GTPase effectors to switch 2 and blocking effector-stimulated GTP hydrolysis, thereby rendering RAB35 constitutively active. Phosphocholinated by L.pneumophila AnkX. Both GDP-bound and GTP-bound forms can be phosphocholinated. Phosphocholination inhibits the GEF activity of DENND1A.

It is found in the cell membrane. The protein localises to the membrane. Its subcellular location is the clathrin-coated pit. It localises to the cytoplasmic vesicle. The protein resides in the clathrin-coated vesicle. It is found in the endosome. The protein localises to the melanosome. The catalysed reaction is GTP + H2O = GDP + phosphate + H(+). With respect to regulation, regulated by guanine nucleotide exchange factors (GEFs) including DENND1A, DENND1B and DENND1C which promote the exchange of bound GDP for free GTP. Regulated by GTPase activating proteins (GAPs) including TBC1D10 and TBC1D13 which increase GTP hydrolysis activity. Inhibited by GDP dissociation inhibitors (GDIs) which prevent Rab-GDP dissociation. In terms of biological role, the small GTPases Rab are key regulators of intracellular membrane trafficking, from the formation of transport vesicles to their fusion with membranes. Rabs cycle between an inactive GDP-bound form and an active GTP-bound form that is able to recruit to membranes different sets of downstream effectors directly responsible for vesicle formation, movement, tethering and fusion. RAB35 is involved in the process of endocytosis and is an essential rate-limiting regulator of the fast recycling pathway back to the plasma membrane. During cytokinesis, required for the postfurrowing terminal steps, namely for intercellular bridge stability and abscission, possibly by controlling phosphatidylinositol 4,5-bis phosphate (PIP2) and SEPT2 localization at the intercellular bridge. May indirectly regulate neurite outgrowth. Together with TBC1D13 may be involved in regulation of insulin-induced glucose transporter SLC2A4/GLUT4 translocation to the plasma membrane in adipocytes. This is Ras-related protein Rab-35 from Homo sapiens (Human).